Consider the following 345-residue polypeptide: Mannonate dehydratase 2 (345 aa).

The protein belongs to the mannonate dehydratase family. Fe(2+) is required as a cofactor. Mn(2+) serves as cofactor.

The catalysed reaction is D-mannonate = 2-dehydro-3-deoxy-D-gluconate + H2O. It functions in the pathway carbohydrate metabolism; pentose and glucuronate interconversion. Functionally, catalyzes the dehydration of D-mannonate. In Halalkalibacterium halodurans (strain ATCC BAA-125 / DSM 18197 / FERM 7344 / JCM 9153 / C-125) (Bacillus halodurans), this protein is Mannonate dehydratase 2 (uxuA2).